Consider the following 63-residue polypeptide: Large ribosomal subunit protein bL32 (63 aa).

The segment covering 1–18 has biased composition (basic residues); that stretch reads MAHPKAKVSKSRRDKRRA. The segment at 1–25 is disordered; sequence MAHPKAKVSKSRRDKRRAQFNARTK.

This sequence belongs to the bacterial ribosomal protein bL32 family.

The chain is Large ribosomal subunit protein bL32 from Chlorobium phaeovibrioides (strain DSM 265 / 1930) (Prosthecochloris vibrioformis (strain DSM 265)).